Here is a 527-residue protein sequence, read N- to C-terminus: G patch domain-containing protein 2 (527 aa).

The disordered stretch occupies residues 35–135; that stretch reads LEESSEQARG…RPSSNLSSSV (101 aa). Residues 62–76 are compositionally biased toward basic residues; the sequence is RQARKRRGRKRRSYN. Basic and acidic residues predominate over residues 97–116; it reads EPSKDYREKHSNNKKDRSDS. Residues Ser114, Ser116, and Ser145 each carry the phosphoserine modification. 3 disordered regions span residues 175–281, 350–375, and 480–527; these read SSKR…GDDE, TPSKNIKKSSGAPPSMLSAPGPGSNK, and TPGS…GNPA. Positions 186–196 are enriched in basic and acidic residues; the sequence is GCRDQDMDNDR. Residues 206–215 show a composition bias toward basic residues; it reads KKVKKRKLKG. Basic and acidic residues predominate over residues 231–257; the sequence is SEERSQPNKDRMEYEEQKASDELRSES. In terms of domain architecture, G-patch spans 466–512; sequence ESNIGNRMLQSMGWTPGSGLGRDGRGIAEPVQAVQRPKGLGLGFPLP. Residues 510–527 are compositionally biased toward low complexity; the sequence is PLPKSSPTSPAPTSGNPA.

Interacts with DHX15.

It is found in the nucleus speckle. The protein resides in the nucleus. The protein localises to the nucleolus. In terms of biological role, enhances the ATPase activity of DHX15 in vitro. The protein is G patch domain-containing protein 2 (Gpatch2) of Mus musculus (Mouse).